Reading from the N-terminus, the 526-residue chain is Vitamin B6 transporter bsu1 (526 aa).

Residues 1 to 53 (MASKIASLFSPSETASKDQHENVAEDLELGTASSQSDGIHETNSEYDEKKREE) are disordered. Residues 38 to 53 (GIHETNSEYDEKKREE) show a composition bias toward basic and acidic residues. Helical transmembrane passes span 81-101 (WSIVFMFCLMQIYVIWTSNGF), 118-138 (VATLCLSMNILGSGLGPMFLG), 147-167 (KPVYFCSIFVYTVFNISCALP), 173-192 (MIISHFIIGVAGSTALTNVA), 204-224 (AGVPMSLFVWACAGGAIGAPM), 238-257 (WLYYINIIVGGFFLIVILII), 314-330 (LYNFYAYGISYFFLTAI), 349-366 (YLSGFVASTLLFLYQPIQ), 387-407 (FTSALFITLLFPAGMFLFAFT), 413-432 (PWMSPIVGNSMVTVANGHNW), 444-461 (PLLSGSAVAAFTLPSFIG), and 480-501 (WAVATMAFISISIPFIIYTFYF).

Belongs to the major facilitator superfamily. CAR1 family.

It localises to the membrane. Functionally, thiamine-regulated, high affinity import carrier of pyridoxine, pyridoxal and pyridoxamine. Also imports, but does not export, amiloride and so confers sensitivity. This chain is Vitamin B6 transporter bsu1 (bsu1), found in Schizosaccharomyces pombe (strain 972 / ATCC 24843) (Fission yeast).